We begin with the raw amino-acid sequence, 634 residues long: 1-deoxy-D-xylulose-5-phosphate synthase (634 aa).

Thiamine diphosphate is bound by residues histidine 74 and alanine 115–serine 117. Aspartate 146 provides a ligand contact to Mg(2+). Residues glycine 147–alanine 148, asparagine 176, tyrosine 283, and glutamate 365 contribute to the thiamine diphosphate site. Asparagine 176 serves as a coordination point for Mg(2+).

Belongs to the transketolase family. DXPS subfamily. As to quaternary structure, homodimer. Mg(2+) serves as cofactor. Thiamine diphosphate is required as a cofactor.

It catalyses the reaction D-glyceraldehyde 3-phosphate + pyruvate + H(+) = 1-deoxy-D-xylulose 5-phosphate + CO2. The protein operates within metabolic intermediate biosynthesis; 1-deoxy-D-xylulose 5-phosphate biosynthesis; 1-deoxy-D-xylulose 5-phosphate from D-glyceraldehyde 3-phosphate and pyruvate: step 1/1. Catalyzes the acyloin condensation reaction between C atoms 2 and 3 of pyruvate and glyceraldehyde 3-phosphate to yield 1-deoxy-D-xylulose-5-phosphate (DXP). This chain is 1-deoxy-D-xylulose-5-phosphate synthase, found in Burkholderia ambifaria (strain MC40-6).